Here is a 103-residue protein sequence, read N- to C-terminus: ATP synthase F(0) complex subunit g, mitochondrial (103 aa).

The residue at position 2 (alanine 2) is an N-acetylalanine. 4 positions are modified to N6-acetyllysine: lysine 11, lysine 24, lysine 35, and lysine 54.

Belongs to the ATPase g subunit family. As to quaternary structure, component of the ATP synthase complex composed at least of ATP5F1A/subunit alpha, ATP5F1B/subunit beta, ATP5MC1/subunit c (homooctomer), MT-ATP6/subunit a, MT-ATP8/subunit 8, ATP5ME/subunit e, ATP5MF/subunit f, ATP5MG/subunit g, ATP5MK/subunit k, ATP5MJ/subunit j, ATP5F1C/subunit gamma, ATP5F1D/subunit delta, ATP5F1E/subunit epsilon, ATP5PF/subunit F6, ATP5PB/subunit b, ATP5PD/subunit d, ATP5PO/subunit OSCP. ATP synthase complex consists of a soluble F(1) head domain (subunits alpha(3) and beta(3)) - the catalytic core - and a membrane F(0) domain - the membrane proton channel (subunits c, a, 8, e, f, g, k and j). These two domains are linked by a central stalk (subunits gamma, delta, and epsilon) rotating inside the F1 region and a stationary peripheral stalk (subunits F6, b, d, and OSCP).

Its subcellular location is the mitochondrion. It is found in the mitochondrion inner membrane. In terms of biological role, subunit g, of the mitochondrial membrane ATP synthase complex (F(1)F(0) ATP synthase or Complex V) that produces ATP from ADP in the presence of a proton gradient across the membrane which is generated by electron transport complexes of the respiratory chain. ATP synthase complex consist of a soluble F(1) head domain - the catalytic core - and a membrane F(1) domain - the membrane proton channel. These two domains are linked by a central stalk rotating inside the F(1) region and a stationary peripheral stalk. During catalysis, ATP synthesis in the catalytic domain of F(1) is coupled via a rotary mechanism of the central stalk subunits to proton translocation. In vivo, can only synthesize ATP although its ATP hydrolase activity can be activated artificially in vitro. Part of the complex F(0) domain. The sequence is that of ATP synthase F(0) complex subunit g, mitochondrial from Mus musculus (Mouse).